We begin with the raw amino-acid sequence, 603 residues long: Aspartate--tRNA(Asp/Asn) ligase (603 aa).

The segment at 205–208 (QLFK) is aspartate. Residue arginine 227 coordinates L-aspartate. ATP-binding positions include 227-229 (RDE) and glutamine 236. Histidine 463 provides a ligand contact to L-aspartate. Glutamate 497 serves as a coordination point for ATP. An L-aspartate-binding site is contributed by arginine 504. 549-552 (GMDR) provides a ligand contact to ATP.

This sequence belongs to the class-II aminoacyl-tRNA synthetase family. Type 1 subfamily. As to quaternary structure, homodimer.

The protein localises to the cytoplasm. It carries out the reaction tRNA(Asx) + L-aspartate + ATP = L-aspartyl-tRNA(Asx) + AMP + diphosphate. Its function is as follows. Aspartyl-tRNA synthetase with relaxed tRNA specificity since it is able to aspartylate not only its cognate tRNA(Asp) but also tRNA(Asn). Reaction proceeds in two steps: L-aspartate is first activated by ATP to form Asp-AMP and then transferred to the acceptor end of tRNA(Asp/Asn). The chain is Aspartate--tRNA(Asp/Asn) ligase from Anaeromyxobacter dehalogenans (strain 2CP-1 / ATCC BAA-258).